A 739-amino-acid chain; its full sequence is Disintegrin and metalloproteinase domain-containing protein 18 (739 aa).

The signal sequence occupies residues Met1–Ala16. Positions His17 to Gln184 are excised as a propeptide. Residues Asn36, Asn76, Asn122, Asn149, Asn156, Asn177, and Asn294 are each glycosylated (N-linked (GlcNAc...) asparagine). The Extracellular segment spans residues Asn177–Asn687. The region spanning Gln184–Ser381 is the Peptidase M12B domain. 4 disulfide bridges follow: Cys293–Cys376, Cys335–Cys360, Cys337–Cys342, and Cys450–Cys471. Residues Asn359, Asn465, Asn561, Asn611, and Asn625 are each glycosylated (N-linked (GlcNAc...) asparagine). The 90-residue stretch at Gln390–Asn479 folds into the Disintegrin domain. The region spanning Met620–Lys654 is the EGF-like domain. 3 cysteine pairs are disulfide-bonded: Cys624–Cys636, Cys630–Cys642, and Cys644–Cys653. The helical transmembrane segment at Trp688 to Phe708 threads the bilayer. Over Lys709–His739 the chain is Cytoplasmic.

Post-translationally, the prodomain and the metalloprotease-like domain are cleaved during the epididymal maturation of the spermatozoa. As to expression, expressed specifically in testis.

The protein resides in the membrane. In terms of biological role, sperm surface membrane protein that may be involved in spermatogenesis and fertilization. This is a non catalytic metalloprotease-like protein. This chain is Disintegrin and metalloproteinase domain-containing protein 18 (ADAM18), found in Homo sapiens (Human).